Here is a 454-residue protein sequence, read N- to C-terminus: tRNA modification GTPase MnmE (454 aa).

The (6S)-5-formyl-5,6,7,8-tetrahydrofolate site is built by Arg23, Glu80, and Lys120. Residues 216–377 form the TrmE-type G domain; it reads GMKVVIAGRP…LRSHLKEAMG (162 aa). Asn226 is a binding site for K(+). Residues 226–231, 245–251, 270–273, and 358–360 contribute to the GTP site; these read NAGKSS, TDIAGTT, DTAG, and SAR. A Mg(2+)-binding site is contributed by Ser230. 3 residues coordinate K(+): Thr245, Ile247, and Thr250. Thr251 provides a ligand contact to Mg(2+). Lys454 is a (6S)-5-formyl-5,6,7,8-tetrahydrofolate binding site.

This sequence belongs to the TRAFAC class TrmE-Era-EngA-EngB-Septin-like GTPase superfamily. TrmE GTPase family. As to quaternary structure, homodimer. Heterotetramer of two MnmE and two MnmG subunits. It depends on K(+) as a cofactor.

Its subcellular location is the cytoplasm. Functionally, exhibits a very high intrinsic GTPase hydrolysis rate. Involved in the addition of a carboxymethylaminomethyl (cmnm) group at the wobble position (U34) of certain tRNAs, forming tRNA-cmnm(5)s(2)U34. The polypeptide is tRNA modification GTPase MnmE (Proteus mirabilis (strain HI4320)).